The chain runs to 472 residues: Tryptophanase (472 aa).

K270 is subject to N6-(pyridoxal phosphate)lysine.

It belongs to the beta-eliminating lyase family. In terms of assembly, homotetramer. Pyridoxal 5'-phosphate serves as cofactor.

It carries out the reaction L-tryptophan + H2O = indole + pyruvate + NH4(+). The protein operates within amino-acid degradation; L-tryptophan degradation via pyruvate pathway; indole and pyruvate from L-tryptophan: step 1/1. The chain is Tryptophanase (tnaA) from Vibrio cholerae serotype O1 (strain ATCC 39315 / El Tor Inaba N16961).